Here is a 286-residue protein sequence, read N- to C-terminus: UPF0725 protein At2g20620 (286 aa).

Residues 1 to 49 form a disordered region; it reads MVLETPVCSPIDKESSSDDVQLNKPPKKKRKLDVVYPPRDNTSSSSDVK.

Belongs to the UPF0725 (EMB2204) family.

The protein is UPF0725 protein At2g20620 of Arabidopsis thaliana (Mouse-ear cress).